The primary structure comprises 126 residues: Large ribosomal subunit protein bL21 (126 aa).

The segment at 105-126 is disordered; it reads KKPSVGPRAKRTKAAPAAEAAE.

Contacts protein L20. Part of the 50S ribosomal subunit.

Its function is as follows. This protein binds to 23S rRNA in the presence of protein L20. This Rhodopseudomonas palustris (strain ATCC BAA-98 / CGA009) protein is Large ribosomal subunit protein bL21.